A 134-amino-acid polypeptide reads, in one-letter code: Loki profilin-2 (134 aa).

Residues 55–62 (LALGEKGI) form a loki loop region.

The protein belongs to the Asgard profilin family.

It localises to the cytoplasm. The protein resides in the cytoskeleton. Its activity is regulated as follows. Inhibition of rabbit actin polymerization is reduced by phosphatidylinositol-(4,5)-P2(1,2-dipalmitoyl), a soluble form of the phospholipid phosphatidylinositol, suggesting an unknown lipid might regulate actin-profilin interaction in vivo. In terms of biological role, binds to actin and affects the structure of the cytoskeleton. At high concentrations inhibits spontaneous rabbit actin nucleation. This strongly suggests this archaea has a profilin-regulated actin system, and actin-type genes can be identified in this organism. The protein is Loki profilin-2 of Lokiarchaeum sp. (strain GC14_75).